The primary structure comprises 130 residues: Small ribosomal subunit protein uS8 (130 aa).

Belongs to the universal ribosomal protein uS8 family. In terms of assembly, part of the 30S ribosomal subunit. Contacts proteins S5 and S12.

Functionally, one of the primary rRNA binding proteins, it binds directly to 16S rRNA central domain where it helps coordinate assembly of the platform of the 30S subunit. The sequence is that of Small ribosomal subunit protein uS8 from Klebsiella pneumoniae subsp. pneumoniae (strain ATCC 700721 / MGH 78578).